The following is a 499-amino-acid chain: Aspartyl/glutamyl-tRNA(Asn/Gln) amidotransferase subunit B (499 aa).

This sequence belongs to the GatB/GatE family. GatB subfamily. As to quaternary structure, heterotrimer of A, B and C subunits.

It catalyses the reaction L-glutamyl-tRNA(Gln) + L-glutamine + ATP + H2O = L-glutaminyl-tRNA(Gln) + L-glutamate + ADP + phosphate + H(+). The catalysed reaction is L-aspartyl-tRNA(Asn) + L-glutamine + ATP + H2O = L-asparaginyl-tRNA(Asn) + L-glutamate + ADP + phosphate + 2 H(+). Functionally, allows the formation of correctly charged Asn-tRNA(Asn) or Gln-tRNA(Gln) through the transamidation of misacylated Asp-tRNA(Asn) or Glu-tRNA(Gln) in organisms which lack either or both of asparaginyl-tRNA or glutaminyl-tRNA synthetases. The reaction takes place in the presence of glutamine and ATP through an activated phospho-Asp-tRNA(Asn) or phospho-Glu-tRNA(Gln). The protein is Aspartyl/glutamyl-tRNA(Asn/Gln) amidotransferase subunit B of Salinispora tropica (strain ATCC BAA-916 / DSM 44818 / JCM 13857 / NBRC 105044 / CNB-440).